The primary structure comprises 287 residues: PPP2R1A-PPP2R2A-interacting phosphatase regulator 1 (287 aa).

The segment at 1–44 is disordered; that stretch reads MAQEKMELDLELPPGTGGSPAEGGGSGGGGGLRRSNSAPLIHGL. The span at 15–32 shows a compositional bias: gly residues; that stretch reads GTGGSPAEGGGSGGGGGL. Residue S35 is modified to Phosphoserine. S37 carries the post-translational modification Phosphoserine; by CHEK1. Position 45 is a phosphoserine (S45). Residue T47 is modified to Phosphothreonine. A phosphoserine mark is found at S48, S62, and S76. K89 is covalently cross-linked (Glycyl lysine isopeptide (Lys-Gly) (interchain with G-Cter in SUMO1)). Phosphoserine is present on residues S143 and S147. T149 carries the post-translational modification Phosphothreonine. Disordered regions lie at residues 167-189 and 236-287; these read SNGL…RSQS and GVCV…LSSK. 2 stretches are compositionally biased toward low complexity: residues 178–189 and 246–257; these read PTTRFTTRRSQS and GNSSSAGSSCNS. 2 positions are modified to phosphoserine: S187 and S189. The span at 259 to 270 shows a compositional bias: polar residues; that stretch reads AKVSTTTDSPVS. Phosphoserine occurs at positions 267, 270, and 276.

Belongs to the FAM122 family. Interacts with PPP2CA and PPP2R1A. Interacts (via its N-terminus) with PPP2R2A; the interaction is direct and this interaction inhibits PP2A activity. The CHEK1-mediated Ser-37 phosphorylated form interacts with 14-3-3 proteins. Post-translationally, CHEK1-mediated phosphorylation at Ser-37 negatively regulates its ability to inhibit serine/threonine-protein phosphatase 2A (PP2A) activity. Phosphorylation leads to its release from the PP2A complex and its sequestration by 14-3-3 proteins in the cytoplasm resulting in its inability to translocate to the nucleus, where it otherwise inhibits PP2A.

Its subcellular location is the nucleus. The protein resides in the cytoplasm. In terms of biological role, acts as an inhibitor of serine/threonine-protein phosphatase 2A (PP2A) activity. Inhibits PP2A activity by blocking the substrate binding site on PPP2R2A and the active site of PPP2CA. Potentiates ubiquitin-mediated proteasomal degradation of serine/threonine-protein phosphatase 2A catalytic subunit alpha (PPP2CA). Inhibits PP2A-mediated dephosphorylation of WEE1, promoting ubiquitin-mediated proteolysis of WEE1, thereby releasing G2/M checkpoint. The sequence is that of PPP2R1A-PPP2R2A-interacting phosphatase regulator 1 from Homo sapiens (Human).